Reading from the N-terminus, the 578-residue chain is Arginine--tRNA ligase (578 aa).

A 'HIGH' region motif is present at residues 127-137 (PNLAKEMHVGH).

Belongs to the class-I aminoacyl-tRNA synthetase family. Monomer.

The protein localises to the cytoplasm. It catalyses the reaction tRNA(Arg) + L-arginine + ATP = L-arginyl-tRNA(Arg) + AMP + diphosphate. The sequence is that of Arginine--tRNA ligase from Pseudomonas fluorescens (strain SBW25).